Reading from the N-terminus, the 99-residue chain is MSRACELTGKSVQYGNNVSHANNKTRRRFLPNLCNVTLMSETLGQSYRLRVSANALRSVEHRGGLDAFLVKSDDKELSQRARLLKRQIAKKQAEAAVAA.

The protein belongs to the bacterial ribosomal protein bL28 family.

The polypeptide is Large ribosomal subunit protein bL28 (Brucella anthropi (strain ATCC 49188 / DSM 6882 / CCUG 24695 / JCM 21032 / LMG 3331 / NBRC 15819 / NCTC 12168 / Alc 37) (Ochrobactrum anthropi)).